We begin with the raw amino-acid sequence, 206 residues long: Ephrin-A4 (206 aa).

The signal sequence occupies residues 1 to 25 (MRLLPLLRTVLWAALLGSRLPGCSS). One can recognise an Ephrin RBD domain in the interval 26 to 158 (LRHPIYWNSS…RLQVSVCCKE (133 aa)). A glycan (N-linked (GlcNAc...) asparagine) is linked at N33. Residues 41–43 (RGD) carry the Cell attachment site motif. Cystine bridges form between C58–C99 and C86–C147. N98 is a glycosylation site (N-linked (GlcNAc...) asparagine). A disordered region spans residues 161–180 (SSHESAHPVGSPGESGTSGW). Residue S175 is the site of GPI-anchor amidated serine attachment. The propeptide at 176–206 (GTSGWRGGHAPSPLCLLLLLLLPILRLLRVL) is removed in mature form.

It belongs to the ephrin family. In terms of tissue distribution, expressed in myogenic progenitor cells.

The protein resides in the cell membrane. Functionally, cell surface GPI-bound ligand for Eph receptors, a family of receptor tyrosine kinases which are crucial for migration, repulsion and adhesion during neuronal, vascular and epithelial development. Binds promiscuously Eph receptors residing on adjacent cells, leading to contact-dependent bidirectional signaling into neighboring cells. May play a role in the interaction between activated B-lymphocytes and dendritic cells in tonsils. This is Ephrin-A4 (Efna4) from Mus musculus (Mouse).